Reading from the N-terminus, the 202-residue chain is MGEMVRIAVVHDEKLLRSALVQLLRSDDTLDVSSHCLDADGPELSAALPADVCVVDGECLTGPEDAGAGRLRARYGDRLVVLATAKRPGVLRRAFDGGALGLVDKNAPAHRLITAVHTVARGERFLDETLTVALLKGAEMPLTTRELGVLTLASQGAPIAEIAARLHLSRGTVRNYMATAVRKVGARNRVDAIRIVQSAGWT.

The segment at 1-121 is response regulatory; the sequence is MGEMVRIAVV…LITAVHTVAR (121 aa). Residues 135–200 enclose the HTH luxR-type domain; it reads LKGAEMPLTT…DAIRIVQSAG (66 aa). The segment at residues 159-178 is a DNA-binding region (H-T-H motif); the sequence is IAEIAARLHLSRGTVRNYMA.

In terms of assembly, homodimer, in the absence of phosphorylation. Post-translationally, may be phosphorylated by an unknown kinase, probably on Asp-56.

Its function is as follows. A transcription factor required for aerial hyphae formation on rich medium. Activates transcription of ramC. Might be part of a two-component regulatory system. Binds the promoter of ramC. Non-phosphorylated protein cooperatively binds multiple sites in the ramC promoter. Has not been seen to autophosphorylate using the small molecule phosphodonors phosphoramidate, acetyl phosphate or carbamoyl phosphate. Upon low expression suppresses the bald (bld, no aerial hyphae) phenotype of citA but not bldJ mutants; higher expression also suppresses the bldJ mutant as well as several other bld mutations, inducing SapB production even on media where SapB is normally not produced. Expression of the ram locus (ramA, ramB and ramR) induces rapid aerial mycelium formation in S.lividans. Overexpression suppresses the no aerial hyphae phenotype of a chaplin-negative strain, probably by inducing expression of SapB. Overexpression of RamR show there are about 280 genes having at least a threefold increase or fourfold decrease in RNA abundance versus wild-type including gene cluster SCO4072-SCO4075. In Streptomyces coelicolor (strain ATCC BAA-471 / A3(2) / M145), this protein is Response regulator RamR.